A 95-amino-acid polypeptide reads, in one-letter code: Protein K6 (95 aa).

Positions 1 to 24 (MAPVHVLCCVSVLLATFYLTPTES) are cleaved as a signal peptide.

The polypeptide is Protein K6 (K6) (Human herpesvirus 8 type P (isolate GK18) (HHV-8)).